We begin with the raw amino-acid sequence, 695 residues long: N-terminal acetyltransferase A complex subunit-like protein C418.02 (695 aa).

10 TPR repeats span residues 8–41, 43–75, 76–109, 111–143, 145–177, 217–250, 262–296, 365–398, 399–432, and 477–510; these read EAFLFDRSIDQFEKGQYSKSLKTIQSVLKKKPKH, DSVALLGLNLCKLHDSRSALLKCGYASSIDPKS, QFCWHALAIVYRETKDYNNSLKCYQNALAISPNN, SLWYDAAYLQAQLGLYQPLFDNWNRLLQLDSSN, EYRLCFTLSAFLSGNYKESLEQIQYLISSCNLS, FNFEHIKADFAFRQKNYEESIYLYARLLIKFPNR, WNFYKSGGLALDLLLKRTDSLIKTFSEILQTGISV, LWCTYCLCLAHYKLGDYEESNYWLNLAIDHTPTY, PELFLAKAKIFLCMGEIEEALCSFKRSVELDKSD, and VWFLVEDGESLLRQKLYGLALKRFHSIYQIYKKW.

As to quaternary structure, component of the N-terminal acetyltransferase A (NatA) complex.

It localises to the cytoplasm. The protein localises to the nucleus. Its function is as follows. Non-catalytic component of the NatA N-terminal acetyltransferase, which catalyzes acetylation of proteins beginning with Met-Ser, Met-Gly and Met-Ala. N-acetylation plays a role in normal eukaryotic translation and processing, protect against proteolytic degradation and protein turnover. The protein is N-terminal acetyltransferase A complex subunit-like protein C418.02 of Schizosaccharomyces pombe (strain 972 / ATCC 24843) (Fission yeast).